The chain runs to 368 residues: RNA polymerase sigma factor SigA (368 aa).

A sigma-70 factor domain-1 region spans residues 16 to 90; sequence TLTLEDVKKQ…KLNPSDLSAP (75 aa). A disordered region spans residues 69 to 90; the sequence is LVNEKDSSDTDEKLNPSDLSAP. Residues 71-83 show a composition bias toward basic and acidic residues; it reads NEKDSSDTDEKLN. A sigma-70 factor domain-2 region spans residues 135-205; sequence LAEANLRLVV…TRAIADQART (71 aa). An Interaction with polymerase core subunit RpoC motif is present at residues 159–162; it reads DLIQ. The segment at 214–291 is sigma-70 factor domain-3; that stretch reads ETINKLIRVQ…QEAQSPSDHA (78 aa). The interval 303-356 is sigma-70 factor domain-4; the sequence is VLDTLTDREENVLRLRFGLDDGRTRTLEEVGKVFGVTRERIRQIEAKALRKLRH. Positions 329-348 form a DNA-binding region, H-T-H motif; that stretch reads LEEVGKVFGVTRERIRQIEA.

The protein belongs to the sigma-70 factor family. RpoD/SigA subfamily. In terms of assembly, interacts transiently with the RNA polymerase catalytic core formed by RpoA, RpoB, RpoC and RpoZ (2 alpha, 1 beta, 1 beta' and 1 omega subunit) to form the RNA polymerase holoenzyme that can initiate transcription. Interacts (via sigma-70 factor domain 4) with the phage G1 protein gp67; this inhibits rRNA synthesis. Interaction with phage G1 protein gp67 does not inhibit transcription in general, but selectively inhibits transcription from promoters that require interaction of the RNA polymerase alpha subunit with DNA sequences upstream of the -35 promoter element.

The protein resides in the cytoplasm. Sigma factors are initiation factors that promote the attachment of RNA polymerase to specific initiation sites and are then released. This sigma factor is the primary sigma factor during exponential growth. The sequence is that of RNA polymerase sigma factor SigA from Staphylococcus aureus (strain NCTC 8325 / PS 47).